Reading from the N-terminus, the 370-residue chain is Tyrosine-protein kinase transforming protein SEA (370 aa).

The region spanning 60–323 is the Protein kinase domain; that stretch reads THRSRVIGRG…GLVCELERVL (264 aa). ATP-binding positions include 66–74 and Lys92; that span reads IGRGHFGSV. Asp186 acts as the Proton acceptor in catalysis. Residue Tyr216 is modified to Phosphotyrosine; by autocatalysis. The interval 345-370 is disordered; sequence PPFPPAPRGQLPDSEDEEDEEEEVAE. Over residues 357–370 the composition is skewed to acidic residues; sequence DSEDEEDEEEEVAE.

This sequence belongs to the protein kinase superfamily. Tyr protein kinase family.

The enzyme catalyses L-tyrosyl-[protein] + ATP = O-phospho-L-tyrosyl-[protein] + ADP + H(+). The sequence is that of Tyrosine-protein kinase transforming protein SEA (V-SEA) from Galliformes.